The chain runs to 83 residues: Colicin-E5 immunity protein (83 aa).

Functionally, this protein is able to protect a cell, which harbors the plasmid ColE5 encoding colicin E5, against colicin E5. The polypeptide is Colicin-E5 immunity protein (imm) (Escherichia coli).